Here is a 357-residue protein sequence, read N- to C-terminus: G-protein coupled receptor 183 (357 aa).

Over 1–27 the chain is Extracellular; sequence MANNFTTPLATSHGNNCDLYAHHSTAR. N4 carries N-linked (GlcNAc...) asparagine glycosylation. Residues 28-53 form a helical membrane-spanning segment; it reads VLMPLHYSLVFIIGLVGNLLALVVIV. Residues 54–73 are Cytoplasmic-facing; the sequence is QNRKKINSTTLYSMNLVISD. The helical transmembrane segment at 74–91 threads the bilayer; it reads ILFTTALPTRIAYYALGF. R83 contributes to the 7alpha,25-dihydroxycholesterol binding site. Residues 92–101 lie on the Extracellular side of the membrane; it reads DWRIGDALCR. A disulfide bridge links C100 with C177. The chain crosses the membrane as a helical span at residues 102–123; it reads VTALVFYINTYAGVNFMTCLSI. 7alpha,25-dihydroxycholesterol-binding residues include Y108 and Y112. Positions 122–130 are interaction with G proteins; it reads SIDRFFAVV. Over 124-145 the chain is Cytoplasmic; it reads DRFFAVVHPLRYNKIKRIEYAK. The helical transmembrane segment at 146 to 164 threads the bilayer; the sequence is GVCLSVWILVFAQTLPLLL. The Extracellular segment spans residues 165-188; the sequence is TPMSKEEGDKTTCMEYPNFEGTAS. The helical transmembrane segment at 189–211 threads the bilayer; it reads LPWILLGACLLGYVLPITVILLC. Residues 212-237 lie on the Cytoplasmic side of the membrane; it reads YSQICCKLFRTAKQNPLTEKSGVNKK. Residues 238-261 traverse the membrane as a helical segment; it reads ALNTIILIIVVFILCFTPYHVAII. Y256 lines the 7alpha,25-dihydroxycholesterol pocket. Topologically, residues 262-283 are extracellular; sequence QHMIKMLCSPGALECGARHSFQ. A helical membrane pass occupies residues 284-308; it reads ISLHFTVCLMNFNCCMDPFIYFFAC. The Cytoplasmic segment spans residues 309 to 357; it reads KGYKRKVMKMLKRQVSVSISSAVRSAPEENSREMTESQMMIHSKASNGR. 2 positions are modified to phosphoserine: S324 and S345. The tract at residues 336–357 is disordered; that stretch reads EENSREMTESQMMIHSKASNGR. Residues 344 to 357 are compositionally biased toward polar residues; sequence ESQMMIHSKASNGR.

Belongs to the G-protein coupled receptor 1 family. Homodimer and heterodimer. Heterodimerizes with CXCR5; leading to modulate the interaction between of CXCL13 and CXCR5. In terms of tissue distribution, expressed in mature B-cells and increases in expression early after activation, before being down-regulated in germinal center B-cells. Expressed in astrocytes. Specifically expressed in CD4(+) dendritic cells but not in CD8(+) dendritic cells. Expressed in monocyte/osteoclasts precursors and mature osteoclasts.

The protein resides in the cell membrane. G-protein coupled receptor expressed in lymphocytes that acts as a chemotactic receptor for B-cells, T-cells, splenic dendritic cells, monocytes/macrophages and astrocytes. Receptor for oxysterol 7-alpha,25-dihydroxycholesterol (7-alpha,25-OHC) and other related oxysterols. Mediates cell positioning and movement of a number of cells by binding the 7-alpha,25-OHC ligand that forms a chemotactic gradient. Binding of 7-alpha,25-OHC mediates the correct localization of B-cells during humoral immune responses. Collaborates with CXCR5 to mediate B-cell migration; probably by forming a heterodimer with CXCR5 that affects the interaction between of CXCL13 and CXCR5. Guides B-cell movement along the B-cell zone-T-cell zone boundary and later to interfollicular and outer follicular regions. Its specific expression during B-cell maturation helps position B-cells appropriately for mounting T-dependent antibody responses. Also acts as a chemotactic receptor for some T-cells upon binding to 7-alpha,25-OHC ligand. Promotes follicular helper T (Tfh) cells differentiation by positioning activated T-cells at the follicle-T-zone interface, promoting contact of newly activated CD4 T-cells with activated dendritic cells and exposing them to Tfh-cell-promoting inducible costimulator (ICOS) ligand. Expression in splenic dendritic cells is required for their homeostasis, localization and ability to induce B- and T-cell responses: GPR183 acts as a chemotactic receptor in dendritic cells that mediates the accumulation of CD4(+) dendritic cells in bridging channels. Regulates migration of astrocytes and is involved in communication between astrocytes and macrophages. Promotes osteoclast precursor migration to bone surfaces. Signals constitutively through G(i)-alpha, but not G(s)-alpha or G(q)-alpha. Signals constitutively also via MAPK1/3 (ERK1/2). The sequence is that of G-protein coupled receptor 183 from Mus musculus (Mouse).